Here is a 465-residue protein sequence, read N- to C-terminus: MGSGKVFLFSPSLLWSQTRGVRLIFLLLTLHLGNCIDKADDEDDEDLTMNKTWVLAPKIHEGDITQILNSLLQGYDNKLRPDIGVRPTVIETDVYVNSIGPVDPINMEYTIDIIFAQTWFDSRLKFNSTMKVLMLNSNMVGKIWIPDTFFRNSRKSDAHWITTPNRLLRIWSDGRVLYTLRLTINAECYLQLHNFPMDEHSCPLEFSSYGYPKNEIEYKWKKPSVEVADPKYWRLYQFAFVGLRNSTEISHTISGDYIIMTIFFDLSRRMGYFTIQTYIPCILTVVLSWVSFWINKDAVPARTSLGITTVLTMTTLSTIARKSLPKVSYVTAMDLFVSVCFIFVFAALMEYGTLHYFTSNNKGKTTRDRKLKSKTSVSPGLHAGSTLIPMNNISMPQGEDDYGYQCLEGKDCATFFCCFEDCRTGSWREGRIHIRIAKIDSYSRIFFPTAFALFNLVYWVGYLYL.

Positions 1 to 20 are cleaved as a signal peptide; that stretch reads MGSGKVFLFSPSLLWSQTRG. The Extracellular portion of the chain corresponds to 21–273; sequence VRLIFLLLTL…FDLSRRMGYF (253 aa). N-linked (GlcNAc...) asparagine glycans are attached at residues Asn50 and Asn127. Cys188 and Cys202 are joined by a disulfide. An N-linked (GlcNAc...) asparagine glycan is attached at Asn245. A helical membrane pass occupies residues 274-294; it reads TIQTYIPCILTVVLSWVSFWI. Residues 295–300 are Cytoplasmic-facing; sequence NKDAVP. A helical transmembrane segment spans residues 301-320; it reads ARTSLGITTVLTMTTLSTIA. Residues 321–328 are Extracellular-facing; sequence RKSLPKVS. The helical transmembrane segment at 329–349 threads the bilayer; the sequence is YVTAMDLFVSVCFIFVFAALM. The Cytoplasmic segment spans residues 350-444; sequence EYGTLHYFTS…RIAKIDSYSR (95 aa). A helical transmembrane segment spans residues 445–465; it reads IFFPTAFALFNLVYWVGYLYL.

Belongs to the ligand-gated ion channel (TC 1.A.9) family. Gamma-aminobutyric acid receptor (TC 1.A.9.5) subfamily. GABRG1 sub-subfamily. As to quaternary structure, heteropentamer, formed by a combination of alpha (GABRA1-6), beta (GABRB1-3), gamma (GABRG1-3), delta (GABRD), epsilon (GABRE), rho (GABRR1-3), pi (GABRP) and theta (GABRQ) chains, each subunit exhibiting distinct physiological and pharmacological properties. In terms of processing, may be palmitoylated. As to expression, expressed in brain.

The protein resides in the postsynaptic cell membrane. It is found in the cell membrane. It carries out the reaction chloride(in) = chloride(out). Its function is as follows. Gamma subunit of the heteropentameric ligand-gated chloride channel gated by gamma-aminobutyric acid (GABA), a major inhibitory neurotransmitter in the brain. GABA-gated chloride channels, also named GABA(A) receptors (GABAAR), consist of five subunits arranged around a central pore and contain GABA active binding site(s) located at the alpha and beta subunit interface(s). When activated by GABA, GABAARs selectively allow the flow of chloride anions across the cell membrane down their electrochemical gradient. Chloride influx into the postsynaptic neuron following GABAAR opening decreases the neuron ability to generate a new action potential, thereby reducing nerve transmission. In Rattus norvegicus (Rat), this protein is Gamma-aminobutyric acid receptor subunit gamma-1.